The primary structure comprises 345 residues: Dihydroorotate dehydrogenase (quinone) (345 aa).

Residues A65 to K69 and T89 each bind FMN. K69 lines the substrate pocket. N114–F118 contacts substrate. FMN contacts are provided by N146 and N179. N179 is a binding site for substrate. S182 serves as the catalytic Nucleophile. Residue N184 participates in substrate binding. 2 residues coordinate FMN: K224 and T252. N253–T254 is a substrate binding site. FMN is bound by residues G275, G304, and Y325–T326.

Belongs to the dihydroorotate dehydrogenase family. Type 2 subfamily. In terms of assembly, monomer. The cofactor is FMN.

The protein resides in the cell membrane. The catalysed reaction is (S)-dihydroorotate + a quinone = orotate + a quinol. Its pathway is pyrimidine metabolism; UMP biosynthesis via de novo pathway; orotate from (S)-dihydroorotate (quinone route): step 1/1. In terms of biological role, catalyzes the conversion of dihydroorotate to orotate with quinone as electron acceptor. The chain is Dihydroorotate dehydrogenase (quinone) from Janthinobacterium sp. (strain Marseille) (Minibacterium massiliensis).